The chain runs to 199 residues: Probable chemoreceptor glutamine deamidase CheD (199 aa).

This sequence belongs to the CheD family.

The enzyme catalyses L-glutaminyl-[protein] + H2O = L-glutamyl-[protein] + NH4(+). In terms of biological role, probably deamidates glutamine residues to glutamate on methyl-accepting chemotaxis receptors (MCPs), playing an important role in chemotaxis. The polypeptide is Probable chemoreceptor glutamine deamidase CheD (Cereibacter sphaeroides (strain ATCC 17029 / ATH 2.4.9) (Rhodobacter sphaeroides)).